Here is a 414-residue protein sequence, read N- to C-terminus: F-box protein At3g47030 (414 aa).

Residues 1–24 form a disordered region; sequence MSGMLGLSAVMGKRPKQQVTARPR. The F-box domain occupies 28 to 77; sequence IEKPEEIPDDLLIDVFSRLSIEDVARCRCLSRFWSSILRRRYFTELFHKM.

In Arabidopsis thaliana (Mouse-ear cress), this protein is F-box protein At3g47030.